A 270-amino-acid polypeptide reads, in one-letter code: Aliphatic sulfonates import ATP-binding protein SsuB (270 aa).

Positions 17 to 238 constitute an ABC transporter domain; the sequence is LASKGLRKTF…ARGSHRLAAL (222 aa). 49 to 56 is an ATP binding site; the sequence is GRSGCGKS. The interval 248 to 270 is disordered; that stretch reads STPGTAPEPDPVAPLPTQLRWAH.

It belongs to the ABC transporter superfamily. Aliphatic sulfonates importer (TC 3.A.1.17.2) family. As to quaternary structure, the complex is composed of two ATP-binding proteins (SsuB), two transmembrane proteins (SsuC) and a solute-binding protein (SsuA).

It is found in the cell inner membrane. The enzyme catalyses ATP + H2O + aliphatic sulfonate-[sulfonate-binding protein]Side 1 = ADP + phosphate + aliphatic sulfonateSide 2 + [sulfonate-binding protein]Side 1.. In terms of biological role, part of the ABC transporter complex SsuABC involved in aliphatic sulfonates import. Responsible for energy coupling to the transport system. The chain is Aliphatic sulfonates import ATP-binding protein SsuB from Pseudomonas putida (strain ATCC 47054 / DSM 6125 / CFBP 8728 / NCIMB 11950 / KT2440).